A 439-amino-acid polypeptide reads, in one-letter code: Ribosomal protein uS12 methylthiotransferase RimO (439 aa).

One can recognise an MTTase N-terminal domain in the interval 5–116 (PTIAISHLGC…IVNVIERVEL (112 aa)). Cysteine 14, cysteine 50, cysteine 79, cysteine 154, cysteine 158, and cysteine 161 together coordinate [4Fe-4S] cluster. Residues 140 to 369 (TTTEGVAYLR…MELQQPISQK (230 aa)) form the Radical SAM core domain. A TRAM domain is found at 372 to 438 (QQEVGKIVDV…TYDLYGQVVN (67 aa)).

This sequence belongs to the methylthiotransferase family. RimO subfamily. [4Fe-4S] cluster is required as a cofactor.

It localises to the cytoplasm. It catalyses the reaction L-aspartate(89)-[ribosomal protein uS12]-hydrogen + (sulfur carrier)-SH + AH2 + 2 S-adenosyl-L-methionine = 3-methylsulfanyl-L-aspartate(89)-[ribosomal protein uS12]-hydrogen + (sulfur carrier)-H + 5'-deoxyadenosine + L-methionine + A + S-adenosyl-L-homocysteine + 2 H(+). Catalyzes the methylthiolation of an aspartic acid residue of ribosomal protein uS12. The sequence is that of Ribosomal protein uS12 methylthiotransferase RimO from Nostoc punctiforme (strain ATCC 29133 / PCC 73102).